The following is a 431-amino-acid chain: Glucose-6-phosphate isomerase (431 aa).

The Proton donor role is filled by E284. Catalysis depends on residues H305 and K420.

The protein belongs to the GPI family.

It is found in the cytoplasm. The catalysed reaction is alpha-D-glucose 6-phosphate = beta-D-fructose 6-phosphate. It functions in the pathway carbohydrate biosynthesis; gluconeogenesis. The protein operates within carbohydrate degradation; glycolysis; D-glyceraldehyde 3-phosphate and glycerone phosphate from D-glucose: step 2/4. Functionally, catalyzes the reversible isomerization of glucose-6-phosphate to fructose-6-phosphate. This chain is Glucose-6-phosphate isomerase, found in Mycoplasma genitalium (strain ATCC 33530 / DSM 19775 / NCTC 10195 / G37) (Mycoplasmoides genitalium).